The primary structure comprises 388 residues: Xylose isomerase (388 aa).

Residues histidine 54 and aspartate 57 contribute to the active site. Mg(2+)-binding residues include glutamate 181, glutamate 217, histidine 220, aspartate 245, aspartate 255, aspartate 257, and aspartate 287.

Belongs to the xylose isomerase family. Homotetramer. It depends on Mg(2+) as a cofactor.

Its subcellular location is the cytoplasm. The catalysed reaction is alpha-D-xylose = alpha-D-xylulofuranose. Its function is as follows. Involved in D-xylose catabolism. In Streptomyces murinus, this protein is Xylose isomerase (xylA).